We begin with the raw amino-acid sequence, 201 residues long: dITP/XTP pyrophosphatase (201 aa).

Ser7–Lys12 contributes to the substrate binding site. Residue Asp72 is the Proton acceptor of the active site. Asp72 provides a ligand contact to Mg(2+). Residues Ser73, Phe154–Asp157, Lys177, and His182–Arg183 each bind substrate.

This sequence belongs to the HAM1 NTPase family. Homodimer. Mg(2+) is required as a cofactor.

The enzyme catalyses XTP + H2O = XMP + diphosphate + H(+). It catalyses the reaction dITP + H2O = dIMP + diphosphate + H(+). The catalysed reaction is ITP + H2O = IMP + diphosphate + H(+). Pyrophosphatase that catalyzes the hydrolysis of nucleoside triphosphates to their monophosphate derivatives, with a high preference for the non-canonical purine nucleotides XTP (xanthosine triphosphate), dITP (deoxyinosine triphosphate) and ITP. Seems to function as a house-cleaning enzyme that removes non-canonical purine nucleotides from the nucleotide pool, thus preventing their incorporation into DNA/RNA and avoiding chromosomal lesions. The polypeptide is dITP/XTP pyrophosphatase (Leuconostoc mesenteroides subsp. mesenteroides (strain ATCC 8293 / DSM 20343 / BCRC 11652 / CCM 1803 / JCM 6124 / NCDO 523 / NBRC 100496 / NCIMB 8023 / NCTC 12954 / NRRL B-1118 / 37Y)).